Consider the following 221-residue polypeptide: Hydrogenase expression/formation protein HupD (221 aa).

3 residues coordinate Ni(2+): Glu20, Asp66, and His97.

This sequence belongs to the peptidase A31 family.

In terms of biological role, not known. Could be involved in the processing of hydrogenase. This is Hydrogenase expression/formation protein HupD (hupD) from Thiocapsa roseopersicina.